Consider the following 509-residue polypeptide: Maturase K (509 aa).

It belongs to the intron maturase 2 family. MatK subfamily.

It is found in the plastid. The protein localises to the chloroplast. Its function is as follows. Usually encoded in the trnK tRNA gene intron. Probably assists in splicing its own and other chloroplast group II introns. In Clematis ligusticifolia (Western white clematis), this protein is Maturase K.